The following is a 342-amino-acid chain: GTPase Obg (342 aa).

The Obg domain occupies 1 to 159 (MKFLDLCKVY…RTIWLRLKLI (159 aa)). Positions 160–327 (ADAGLLGLPN…VLRALWAEID (168 aa)) constitute an OBG-type G domain. Residues 166–173 (GLPNAGKS), 191–195 (FTTLV), 212–215 (DIPG), 279–282 (NKID), and 308–310 (SGV) contribute to the GTP site. 2 residues coordinate Mg(2+): Ser173 and Thr193.

Belongs to the TRAFAC class OBG-HflX-like GTPase superfamily. OBG GTPase family. As to quaternary structure, monomer. Mg(2+) serves as cofactor.

It localises to the cytoplasm. In terms of biological role, an essential GTPase which binds GTP, GDP and possibly (p)ppGpp with moderate affinity, with high nucleotide exchange rates and a fairly low GTP hydrolysis rate. Plays a role in control of the cell cycle, stress response, ribosome biogenesis and in those bacteria that undergo differentiation, in morphogenesis control. In Cereibacter sphaeroides (strain ATCC 17029 / ATH 2.4.9) (Rhodobacter sphaeroides), this protein is GTPase Obg.